The sequence spans 359 residues: Nicotinate-nucleotide--dimethylbenzimidazole phosphoribosyltransferase (359 aa).

Glu-318 acts as the Proton acceptor in catalysis.

The protein belongs to the CobT family. In terms of assembly, homodimer.

It carries out the reaction 5,6-dimethylbenzimidazole + nicotinate beta-D-ribonucleotide = alpha-ribazole 5'-phosphate + nicotinate + H(+). It functions in the pathway nucleoside biosynthesis; alpha-ribazole biosynthesis; alpha-ribazole from 5,6-dimethylbenzimidazole: step 1/2. In terms of biological role, catalyzes the synthesis of alpha-ribazole-5'-phosphate from nicotinate mononucleotide (NAMN) and 5,6-dimethylbenzimidazole (DMB). In Shigella sonnei (strain Ss046), this protein is Nicotinate-nucleotide--dimethylbenzimidazole phosphoribosyltransferase.